The primary structure comprises 491 residues: F-box protein At3g59000 (491 aa).

The region spanning 1 to 49 (MDRVGSLPDELLSHILSFLTTKEAALTSLLSKRWRYLIAFVPNLAFDDI) is the F-box domain.

In terms of assembly, part of a SCF (ASK-cullin-F-box) protein ligase complex. Interacts with ASK4.

The protein localises to the nucleus. It functions in the pathway protein modification; protein ubiquitination. Its function is as follows. Component of SCF(ASK-cullin-F-box) E3 ubiquitin ligase complexes, which may mediate the ubiquitination and subsequent proteasomal degradation of target proteins. This Arabidopsis thaliana (Mouse-ear cress) protein is F-box protein At3g59000.